The sequence spans 450 residues: Phosphoglucosamine mutase (450 aa).

Ser101 (phosphoserine intermediate) is an active-site residue. 4 residues coordinate Mg(2+): Ser101, Asp241, Asp243, and Asp245. Ser101 carries the post-translational modification Phosphoserine.

The protein belongs to the phosphohexose mutase family. Mg(2+) serves as cofactor. In terms of processing, activated by phosphorylation.

The enzyme catalyses alpha-D-glucosamine 1-phosphate = D-glucosamine 6-phosphate. In terms of biological role, catalyzes the conversion of glucosamine-6-phosphate to glucosamine-1-phosphate. In Listeria welshimeri serovar 6b (strain ATCC 35897 / DSM 20650 / CCUG 15529 / CIP 8149 / NCTC 11857 / SLCC 5334 / V8), this protein is Phosphoglucosamine mutase.